The primary structure comprises 296 residues: Endonuclease 5 (296 aa).

Positions 1-20 (MRLWIVSVLVLTHLVHGALC) are cleaved as a signal peptide. Residues Trp21 and His26 each coordinate a divalent metal cation. Substrate is bound at residue 21 to 26 (WGKDGH). Cys30 and Cys62 are oxidised to a cystine. A divalent metal cation contacts are provided by Asp66 and His81. Residues 66 to 72 (DEIKKLS), 81 to 84 (HYVN), and 91 to 96 (NYEYCR) each bind substrate. Intrachain disulfides connect Cys90–Cys243, Cys98–Cys108, and Cys223–Cys230. Substrate-binding residues include Asn115 and Tyr133. The N-linked (GlcNAc...) asparagine glycan is linked to Asn115. The N-linked (GlcNAc...) asparagine glycan is linked to Asn134. Positions 144, 148, and 154 each coordinate a divalent metal cation. The interval 144–193 (HYMGDVHQPLHTGFLGDLGGNTIIVNWYHNKSNLHHVWDNMIIDSALETY) is substrate binding. Residue Asn173 is glycosylated (N-linked (GlcNAc...) asparagine). Residues His178 and Asp182 each coordinate a divalent metal cation. Asn195 carries an N-linked (GlcNAc...) asparagine glycan. Positions 281–296 (ATLNRIFSAKPKLAGL) are cleaved as a propeptide — removed in mature form.

This sequence belongs to the nuclease type I family. In terms of assembly, monomer. The cofactor is Zn(2+).

It catalyses the reaction Endonucleolytic cleavage to 5'-phosphomononucleotide and 5'-phosphooligonucleotide end-products.. Its function is as follows. Hydrolyzes, with low efficiency, only single-stranded DNA and RNA without apparent specificity for bases. Endonuclease that recognizes and cleaves some mismatches with high efficiency, including heteroduplex double-stranded DNA; mostly efficient on T/G, A/G and G/G mismatches, less efficient for T/T and poorly efficient for C/C, A/A, T/C and A/C. This Arabidopsis thaliana (Mouse-ear cress) protein is Endonuclease 5.